The primary structure comprises 283 residues: MAEITASLVKELRERTGAGMMDCKKALTEANGDIELAIENMRKSGAIKAAKKAGNVAADGVIKTKIDGNVAFILEVNCQTDFVAKDAGFQAFADKVLDAAVAGKITDVEVLKAQFEEERVALVAKIGENINIRRVASLEGDVLGSYQHGARIGVLVAAKGADEELVKQLAMHVAASKPEFVKPEDVSADVVEKEYQVQLDIAMQSGKPKEIAEKMVEGRMKKFTGEVSLTGQPFVMEPSKSVGQLLKEHNADVTGFIRFEVGEGIEKVETDFAAEVAAMSKQS.

Residues 80–83 form an involved in Mg(2+) ion dislocation from EF-Tu region; sequence TDFV.

This sequence belongs to the EF-Ts family.

The protein localises to the cytoplasm. Functionally, associates with the EF-Tu.GDP complex and induces the exchange of GDP to GTP. It remains bound to the aminoacyl-tRNA.EF-Tu.GTP complex up to the GTP hydrolysis stage on the ribosome. In Salmonella choleraesuis (strain SC-B67), this protein is Elongation factor Ts.